Consider the following 91-residue polypeptide: Small ribosomal subunit protein bS18 (91 aa).

It belongs to the bacterial ribosomal protein bS18 family. Part of the 30S ribosomal subunit. Forms a tight heterodimer with protein bS6.

In terms of biological role, binds as a heterodimer with protein bS6 to the central domain of the 16S rRNA, where it helps stabilize the platform of the 30S subunit. The chain is Small ribosomal subunit protein bS18 from Burkholderia vietnamiensis (strain G4 / LMG 22486) (Burkholderia cepacia (strain R1808)).